Here is a 503-residue protein sequence, read N- to C-terminus: MSNIAPQVLRHASRACSRRLSLSASLVRPAYSARTVTGSGSGGRRYVSGSQRHNAQAQTTVESAVKTEQKASVPGTAVTGDALANPSAGILKQATIMDEGNRPIYLDMQATTPTDPRVLDAMLPFLTGLYGNPHSRTHAYGWETEKATEQARSHVATLIGADPKEIIFTSGATESNNMSIKGVARFFGRSGKKKHIITTQTEHKCVLDSCRHLQDEGFEVTYLPVQSNGLIKIEDLEAAIRPETALVSIMTVNNEIGVIQPMKEIGALCRSKKVFFHTDAAQAVGKIPVDVNEWNVDLMSISGHKLYGPKGIGACYVRRRPRVRIDPLITGGGQERGLRSGTLAPPLVVGFGEACRLAKEEMEYDSKRISALSQRLLTSLLALEHTTLNGDPNRHYPGCVNVSFAYVEGESLLMALKDIALSSGSACTSASLEPSYVLRALGNSDESAHSSIRFGIGRFTTESEIDYVIKAVKERVTFLRELSPLWELVQEGVDLNTIEWSQH.

The N-terminal 27 residues, Met-1–Val-27, are a transit peptide targeting the mitochondrion. Residues Arg-34 to Ser-50 are compositionally biased toward low complexity. The tract at residues Arg-34–Gln-58 is disordered. Residues Ala-172–Thr-173, Asn-254, Gln-282, and Ser-302–His-304 contribute to the pyridoxal 5'-phosphate site. Lys-305 carries the N6-(pyridoxal phosphate)lysine modification. Pyridoxal 5'-phosphate is bound at residue Thr-342. Catalysis depends on Cys-427, which acts as the Cysteine persulfide intermediate. [2Fe-2S] cluster is bound at residue Cys-427.

It belongs to the class-V pyridoxal-phosphate-dependent aminotransferase family. NifS/IscS subfamily. Pyridoxal 5'-phosphate serves as cofactor.

The protein resides in the mitochondrion. The catalysed reaction is (sulfur carrier)-H + L-cysteine = (sulfur carrier)-SH + L-alanine. Its function is as follows. Catalyzes the removal of elemental sulfur from cysteine to produce alanine. It supplies the inorganic sulfur for iron-sulfur (Fe-S) clusters. Plays a role in both tRNA-processing and mitochondrial metabolism. Involved in the 2-thio-modification of both 5-carboxymethylaminomethyl-2-thiouridine in mitochondrial tRNAs and 5-methoxycarbonylmethyl-2-thiouridine (mcm5s2U) in cytoplasmic tRNAs. This chain is Cysteine desulfurase, mitochondrial, found in Arthroderma benhamiae (strain ATCC MYA-4681 / CBS 112371) (Trichophyton mentagrophytes).